Here is a 28-residue protein sequence, read N- to C-terminus: Ranatuerin-2AVa (28 aa).

A disulfide bond links Cys23 and Cys28.

Expressed by the skin glands.

It is found in the secreted. Its function is as follows. Has antibacterial activity against the Gram positive bacterium L.lactis. In Rana arvalis (Moor frog), this protein is Ranatuerin-2AVa.